The following is a 1049-amino-acid chain: Presequence protease, mitochondrial (1049 aa).

The transit peptide at Met1–Leu39 directs the protein to the mitochondrion. His113 is a Zn(2+) binding site. Residue Glu116 is the Proton acceptor of the active site. His117 provides a ligand contact to Zn(2+). Residue Glu189 is part of the active site. Glu222 provides a ligand contact to Zn(2+).

It belongs to the peptidase M16 family. PreP subfamily. Monomer and homodimer; homodimerization is induced by binding of the substrate. Zn(2+) serves as cofactor.

The protein resides in the mitochondrion intermembrane space. It localises to the mitochondrion matrix. Degrades mitochondrial transit peptides after their cleavage in the intermembrane space or in the matrix, and presequence peptides; clearance of these peptides is required to keep the presequence processing machinery running. Preferentially cleaves the N-terminal side of paired basic amino acid residues. Also degrades other unstructured peptides. May function as an ATP-dependent peptidase as opposed to a metalloendopeptidase. The sequence is that of Presequence protease, mitochondrial (cym1) from Emericella nidulans (strain FGSC A4 / ATCC 38163 / CBS 112.46 / NRRL 194 / M139) (Aspergillus nidulans).